Reading from the N-terminus, the 302-residue chain is Probable alpha-L-glutamate ligase (302 aa).

The ATP-grasp domain maps to 112 to 294 (LQLLLKTGVP…IAAEIIDYIE (183 aa)). Residues Lys-148, 185–186 (DF), Asp-194, and 218–220 (RAN) contribute to the ATP site. Mg(2+) is bound by residues Asp-255, Glu-267, and Asn-269. Residues Asp-255, Glu-267, and Asn-269 each contribute to the Mn(2+) site.

Belongs to the RimK family. Mg(2+) serves as cofactor. The cofactor is Mn(2+).

The polypeptide is Probable alpha-L-glutamate ligase (Haemophilus influenzae (strain 86-028NP)).